A 342-amino-acid polypeptide reads, in one-letter code: Ferrochelatase (342 aa).

Fe cation is bound by residues histidine 188 and glutamate 268.

It belongs to the ferrochelatase family.

The protein localises to the cytoplasm. It catalyses the reaction heme b + 2 H(+) = protoporphyrin IX + Fe(2+). It functions in the pathway porphyrin-containing compound metabolism; protoheme biosynthesis; protoheme from protoporphyrin-IX: step 1/1. Functionally, catalyzes the ferrous insertion into protoporphyrin IX. The polypeptide is Ferrochelatase (Rickettsia typhi (strain ATCC VR-144 / Wilmington)).